We begin with the raw amino-acid sequence, 101 residues long: Integration host factor subunit alpha (101 aa).

This sequence belongs to the bacterial histone-like protein family. Heterodimer of an alpha and a beta chain.

Functionally, this protein is one of the two subunits of integration host factor, a specific DNA-binding protein that functions in genetic recombination as well as in transcriptional and translational control. The polypeptide is Integration host factor subunit alpha (Alkalilimnicola ehrlichii (strain ATCC BAA-1101 / DSM 17681 / MLHE-1)).